The primary structure comprises 60 residues: Mastoparan-VT6 (60 aa).

Positions 1-27 are cleaved as a signal peptide; that stretch reads MKNTILILFTAFIALLGFFGMSAEALA. AXPX repeat units follow at residues 27 to 30, 31 to 34, 35 to 38, and 41 to 44; these read ADPK, ADPL, AGPN, and ADPE. A propeptide spanning residues 28 to 45 is cleaved from the precursor; it reads DPKADPLAGPNPDADPEA. Residue L59 is modified to Leucine amide.

This sequence belongs to the MCD family. Mastoparan subfamily. As to expression, expressed by the venom gland.

It is found in the secreted. Functionally, the synthetic peptide shows antimicrobial activities against Gram-negative bacteria (but not against all strains tested), Gram-positive bacteria (all strains tested) and the fungi C.albicans and C.parapsilosis. Exhibits little hemolytic activity against washed human erythrocytes. In Vespa tropica (Greater banded hornet), this protein is Mastoparan-VT6.